Reading from the N-terminus, the 485-residue chain is MELYYLSAKEITEKIKAKEISAVEVAKATFDRIEAVEPKIQAYVTVTRELGLKMAREVDEKIARGEDPGPLAGVPVAIKDNMSTAGIRTTCSSKILENYIPPYDATVVEKLKEAGAVFTGKTNLDEFAMGSSTENSRFFPTRNPWDLERVPGGSSGGSAASVAAGEAVVALGSDTGGSIRQPAAFCGIVGLKPTYGAVSRYGLVAFASSLDQIGPFARTVEDAALLLNVIAGHDPKDSTSADIEYPDYLSFLNQDIKGLKIGLPKEYFIDGIDAGVKKAIDDAIKVLESLGAVFEEVSLPHTKYSLPVYYLIAPAEASSNLARYDGVRYGYRDFEAEDVVEMFSRTRAEGFGAEVKRRIMLGTYALSAGYYDAYYLKALKVRTLIKEDFDRAFTKVDLLLTPTTPTPAFKFGEKTSDPVSMYLSDIFTMAVNLAGLPGISVPAGFDGHLPVSFQLIGKPFDEGTLLKVAHAFEQNTEFHKARPKL.

Catalysis depends on charge relay system residues K79 and S154. The Acyl-ester intermediate role is filled by S178.

It belongs to the amidase family. GatA subfamily. In terms of assembly, heterotrimer of A, B and C subunits.

The enzyme catalyses L-glutamyl-tRNA(Gln) + L-glutamine + ATP + H2O = L-glutaminyl-tRNA(Gln) + L-glutamate + ADP + phosphate + H(+). Functionally, allows the formation of correctly charged Gln-tRNA(Gln) through the transamidation of misacylated Glu-tRNA(Gln) in organisms which lack glutaminyl-tRNA synthetase. The reaction takes place in the presence of glutamine and ATP through an activated gamma-phospho-Glu-tRNA(Gln). The sequence is that of Glutamyl-tRNA(Gln) amidotransferase subunit A from Carboxydothermus hydrogenoformans (strain ATCC BAA-161 / DSM 6008 / Z-2901).